The primary structure comprises 396 residues: (S)-8-oxocitronellyl enol synthase ISY2 (396 aa).

Residues Thr38–Leu40, Arg66–Arg67, Asp84–Val85, Thr108–Trp109, Gln146, Tyr182, Ile209, and Ser216–Met218 each bind NADP(+). Tyr182 is an active-site residue.

Belongs to the short-chain dehydrogenases/reductases (SDR) family.

The catalysed reaction is (S)-8-oxocitronellyl enol + NADP(+) = (6E)-8-oxogeranial + NADPH + H(+). The enzyme catalyses (S)-8-oxocitronellyl enol + NAD(+) = (6E)-8-oxogeranial + NADH + H(+). Iridoid synthase that catalyzes the first step in generation of the iridoid ring scaffold using the linear monoterpene (6E)-8-oxogeranial as substrate. Iridoids comprise a large family of distinctive bicyclic monoterpenes that possess a wide range of pharmacological activities, including anticancer, anti-inflammatory, antifungal and antibacterial activities. Catalyzes the conversion of the linear monoterpene (6E)-8-oxogeranial to (S)-8-oxocitronellyl enol, a precursor of nepetalactones, which are metabolites that are both insect-repellent and have euphoric effect in cats. This Nepeta racemosa (Catmint) protein is (S)-8-oxocitronellyl enol synthase ISY2.